Here is a 365-residue protein sequence, read N- to C-terminus: Phospho-N-acetylmuramoyl-pentapeptide-transferase (365 aa).

10 helical membrane passes run 3–23 (HIII…PILI), 54–74 (GIAI…ASVF), 81–101 (PTAS…LGFL), 119–139 (GKLL…LLFL), 162–182 (IAIG…YILV), 198–218 (LAAG…FWQF), 239–259 (LSIL…WNAA), 263–283 (IFMG…LSVT), 289–309 (LMIV…IQVV), and 342–362 (FWLL…ADWL).

This sequence belongs to the glycosyltransferase 4 family. MraY subfamily. Requires Mg(2+) as cofactor.

The protein resides in the cell membrane. The catalysed reaction is UDP-N-acetyl-alpha-D-muramoyl-L-alanyl-gamma-D-glutamyl-meso-2,6-diaminopimeloyl-D-alanyl-D-alanine + di-trans,octa-cis-undecaprenyl phosphate = di-trans,octa-cis-undecaprenyl diphospho-N-acetyl-alpha-D-muramoyl-L-alanyl-D-glutamyl-meso-2,6-diaminopimeloyl-D-alanyl-D-alanine + UMP. It functions in the pathway cell wall biogenesis; peptidoglycan biosynthesis. In terms of biological role, catalyzes the initial step of the lipid cycle reactions in the biosynthesis of the cell wall peptidoglycan: transfers peptidoglycan precursor phospho-MurNAc-pentapeptide from UDP-MurNAc-pentapeptide onto the lipid carrier undecaprenyl phosphate, yielding undecaprenyl-pyrophosphoryl-MurNAc-pentapeptide, known as lipid I. This chain is Phospho-N-acetylmuramoyl-pentapeptide-transferase, found in Corynebacterium kroppenstedtii (strain DSM 44385 / JCM 11950 / CIP 105744 / CCUG 35717).